The chain runs to 252 residues: Cell division protein ZapD (252 aa).

This sequence belongs to the ZapD family. Interacts with FtsZ.

The protein localises to the cytoplasm. Its function is as follows. Cell division factor that enhances FtsZ-ring assembly. Directly interacts with FtsZ and promotes bundling of FtsZ protofilaments, with a reduction in FtsZ GTPase activity. This is Cell division protein ZapD from Ralstonia nicotianae (strain ATCC BAA-1114 / GMI1000) (Ralstonia solanacearum).